Consider the following 296-residue polypeptide: GTPase Era (296 aa).

Residues 3–170 (KSGFVTIVGR…KELMFKYIPE (168 aa)) enclose the Era-type G domain. The tract at residues 11–18 (GRPNVGKS) is G1. Residue 11–18 (GRPNVGKS) coordinates GTP. The tract at residues 37–41 (QTTRN) is G2. Residues 58-61 (DTPG) are G3. GTP-binding positions include 58 to 62 (DTPGI) and 120 to 123 (NKID). Residues 120 to 123 (NKID) form a G4 region. The segment at 149 to 151 (ISA) is G5. Residues 201–278 (LSEEVPHGIA…YIRLWVKVKE (78 aa)) enclose the KH type-2 domain.

Belongs to the TRAFAC class TrmE-Era-EngA-EngB-Septin-like GTPase superfamily. Era GTPase family. As to quaternary structure, monomer.

The protein resides in the cytoplasm. It localises to the cell membrane. Its function is as follows. An essential GTPase that binds both GDP and GTP, with rapid nucleotide exchange. Plays a role in 16S rRNA processing and 30S ribosomal subunit biogenesis and possibly also in cell cycle regulation and energy metabolism. This chain is GTPase Era, found in Clostridium botulinum (strain Okra / Type B1).